Reading from the N-terminus, the 1115-residue chain is Ubiquitin C-terminal hydrolase 13 (1115 aa).

Positions 1-51 (MTMMTPPPLDQQEDEEMLVPNPDLVEGPQPMEVAQTDPAATAVENPPPEDP) are disordered. The MATH domain occupies 53-178 (SLKFTWTIPM…NDTVLIEAEV (126 aa)). Residues 198–522 (VGLKNQGATC…NAYMLVYIRE (325 aa)) enclose the USP domain. Cys-207 (nucleophile) is an active-site residue. The active-site Proton acceptor is the His-454.

Belongs to the peptidase C19 family. Interacts with SIC/RON3. Interacts with RGI1 and RGI2.

The catalysed reaction is Thiol-dependent hydrolysis of ester, thioester, amide, peptide and isopeptide bonds formed by the C-terminal Gly of ubiquitin (a 76-residue protein attached to proteins as an intracellular targeting signal).. Its function is as follows. Recognizes and hydrolyzes the peptide bond at the C-terminal Gly of ubiquitin. Involved in the processing of poly-ubiquitin precursors as well as that of ubiquitinated proteins. Positive regulator of root meristem development that, together with UBP12, prevents the ubiquitination and turnover of RGFR1 induced by the RGF1 hormone peptide, thus influencing PLT1 and PLT2 expression. The polypeptide is Ubiquitin C-terminal hydrolase 13 (Arabidopsis thaliana (Mouse-ear cress)).